Here is a 207-residue protein sequence, read N- to C-terminus: MYPNSRYILPSLDERTAYGYKQVDPYTKLFEDRIVFLGVQIDDASADDVMAQLLVLEGQDAERDIIMYINSPGGSFTAMTAIYDTMQYIRPQIQTVCLGQAASAAAVILSAGTPGKRLALPNARILIHQPVVASSGYGQASDIEIQAREIMRMREWLEKTLAQHSNKSVKQVSKDIDRDKILSSEQALEYGLIDQILVSRKAGLGKK.

The Nucleophile role is filled by Ser103. Residue His128 is part of the active site.

It belongs to the peptidase S14 family. Fourteen ClpP subunits assemble into 2 heptameric rings which stack back to back to give a disk-like structure with a central cavity, resembling the structure of eukaryotic proteasomes.

Its subcellular location is the cytoplasm. It carries out the reaction Hydrolysis of proteins to small peptides in the presence of ATP and magnesium. alpha-casein is the usual test substrate. In the absence of ATP, only oligopeptides shorter than five residues are hydrolyzed (such as succinyl-Leu-Tyr-|-NHMec, and Leu-Tyr-Leu-|-Tyr-Trp, in which cleavage of the -Tyr-|-Leu- and -Tyr-|-Trp bonds also occurs).. Cleaves peptides in various proteins in a process that requires ATP hydrolysis. Has a chymotrypsin-like activity. Plays a major role in the degradation of misfolded proteins. In Tropheryma whipplei (strain Twist) (Whipple's bacillus), this protein is ATP-dependent Clp protease proteolytic subunit 1.